The chain runs to 804 residues: Leucine--tRNA ligase (804 aa).

The 'HIGH' region signature appears at P39–H50. Positions K573–S577 match the 'KMSKS' region motif. ATP is bound at residue K576.

It belongs to the class-I aminoacyl-tRNA synthetase family.

Its subcellular location is the cytoplasm. The catalysed reaction is tRNA(Leu) + L-leucine + ATP = L-leucyl-tRNA(Leu) + AMP + diphosphate. The polypeptide is Leucine--tRNA ligase (Lactobacillus gasseri (strain ATCC 33323 / DSM 20243 / BCRC 14619 / CIP 102991 / JCM 1131 / KCTC 3163 / NCIMB 11718 / NCTC 13722 / AM63)).